Reading from the N-terminus, the 209-residue chain is MASKTAAAKDIITLHGSAAIVSEFFCYAANSILYNRAVYPEESFVKVKKYGLPMLLIEDESVKSFMSNLTSQISEWLEAGKLQRVVLVIMSKATGEVLERWNFRIETDNEVVDKGVSREKSDKEIMREIQAIMRQVASSVTYLPCLDETCVFDVLAYTDTDVAVPFTWIESDPKLIANPQMVKLHGFDTKIHKVDTLVSYKNDEWDEEE.

One can recognise an HORMA domain in the interval 15–198 (HGSAAIVSEF…TKIHKVDTLV (184 aa)).

The protein belongs to the MAD2 family. Part of the mitotic checkpoint complex (MCC); interacts with MAD1, CDC20-1, CDC20-2 and CDC20-5. Interacts with BUBR1 at chromocenters and with BUB3.1. Interacts with EIF4B3. As to expression, expressed in actively dividing tissues, early in organ development, in young leaves, lateral root primordia and root meristems.

It is found in the nucleus. The protein resides in the nucleus envelope. It localises to the chromosome. The protein localises to the centromere. Its subcellular location is the kinetochore. It is found in the cytoplasm. The protein resides in the cytoskeleton. It localises to the spindle. Its function is as follows. Required for the execution of the mitotic checkpoint which monitors the process of kinetochore-spindle attachment and delays the onset of anaphase when this process is not complete. It inhibits the activity of the anaphase promoting complex by sequestering CDC20 until all chromosomes are aligned at the metaphase plate. In Arabidopsis thaliana (Mouse-ear cress), this protein is Mitotic spindle checkpoint protein MAD2.